The primary structure comprises 570 residues: Adenine deaminase (570 aa).

It belongs to the metallo-dependent hydrolases superfamily. Adenine deaminase family. Mn(2+) is required as a cofactor.

It catalyses the reaction adenine + H2O + H(+) = hypoxanthine + NH4(+). This chain is Adenine deaminase, found in Petrotoga mobilis (strain DSM 10674 / SJ95).